We begin with the raw amino-acid sequence, 132 residues long: Small ribosomal subunit protein uS8 (132 aa).

This sequence belongs to the universal ribosomal protein uS8 family. As to quaternary structure, part of the 30S ribosomal subunit. Contacts proteins S5 and S12.

Functionally, one of the primary rRNA binding proteins, it binds directly to 16S rRNA central domain where it helps coordinate assembly of the platform of the 30S subunit. In Acetivibrio thermocellus (strain ATCC 27405 / DSM 1237 / JCM 9322 / NBRC 103400 / NCIMB 10682 / NRRL B-4536 / VPI 7372) (Clostridium thermocellum), this protein is Small ribosomal subunit protein uS8.